We begin with the raw amino-acid sequence, 464 residues long: Soluble pyridine nucleotide transhydrogenase (464 aa).

35–44 (DSRRQVGGNC) is an FAD binding site.

Belongs to the class-I pyridine nucleotide-disulfide oxidoreductase family. Requires FAD as cofactor.

The protein localises to the cytoplasm. The enzyme catalyses NAD(+) + NADPH = NADH + NADP(+). Functionally, conversion of NADPH, generated by peripheral catabolic pathways, to NADH, which can enter the respiratory chain for energy generation. In Pseudomonas fluorescens (strain Pf0-1), this protein is Soluble pyridine nucleotide transhydrogenase.